The sequence spans 880 residues: DNA mismatch repair protein MutS (880 aa).

An ATP-binding site is contributed by 605 to 612 (GPNMSGKS). Positions 790 to 829 (QETAAVPSRGVEPPAPVIEPTPAKEQTPVKEQTTPLVEES) are disordered. Residues 818-829 (VKEQTTPLVEES) show a composition bias toward polar residues.

The protein belongs to the DNA mismatch repair MutS family.

Its function is as follows. This protein is involved in the repair of mismatches in DNA. It is possible that it carries out the mismatch recognition step. This protein has a weak ATPase activity. The protein is DNA mismatch repair protein MutS of Limosilactobacillus fermentum (strain NBRC 3956 / LMG 18251) (Lactobacillus fermentum).